We begin with the raw amino-acid sequence, 421 residues long: 3-isopropylmalate dehydratase large subunit (421 aa).

3 residues coordinate [4Fe-4S] cluster: Cys-300, Cys-360, and Cys-363.

It belongs to the aconitase/IPM isomerase family. LeuC type 2 subfamily. Heterodimer of LeuC and LeuD. The cofactor is [4Fe-4S] cluster.

The enzyme catalyses (2R,3S)-3-isopropylmalate = (2S)-2-isopropylmalate. It functions in the pathway amino-acid biosynthesis; L-leucine biosynthesis; L-leucine from 3-methyl-2-oxobutanoate: step 2/4. In terms of biological role, catalyzes the isomerization between 2-isopropylmalate and 3-isopropylmalate, via the formation of 2-isopropylmaleate. The polypeptide is 3-isopropylmalate dehydratase large subunit (Thermodesulfovibrio yellowstonii (strain ATCC 51303 / DSM 11347 / YP87)).